Reading from the N-terminus, the 286-residue chain is Acetyl-coenzyme A carboxylase carboxyl transferase subunit beta (286 aa).

In terms of domain architecture, CoA carboxyltransferase N-terminal spans 26-286 (LWEKCVKCDA…LAKFTRRAAV (261 aa)). Positions 30, 33, 49, and 52 each coordinate Zn(2+). The C4-type zinc finger occupies 30–52 (CVKCDAVLYKPELEKNLDVCPKC).

Belongs to the AccD/PCCB family. As to quaternary structure, acetyl-CoA carboxylase is a heterohexamer composed of biotin carboxyl carrier protein (AccB), biotin carboxylase (AccC) and two subunits each of ACCase subunit alpha (AccA) and ACCase subunit beta (AccD). It depends on Zn(2+) as a cofactor.

The protein resides in the cytoplasm. The catalysed reaction is N(6)-carboxybiotinyl-L-lysyl-[protein] + acetyl-CoA = N(6)-biotinyl-L-lysyl-[protein] + malonyl-CoA. It functions in the pathway lipid metabolism; malonyl-CoA biosynthesis; malonyl-CoA from acetyl-CoA: step 1/1. Its function is as follows. Component of the acetyl coenzyme A carboxylase (ACC) complex. Biotin carboxylase (BC) catalyzes the carboxylation of biotin on its carrier protein (BCCP) and then the CO(2) group is transferred by the transcarboxylase to acetyl-CoA to form malonyl-CoA. This chain is Acetyl-coenzyme A carboxylase carboxyl transferase subunit beta, found in Cellvibrio japonicus (strain Ueda107) (Pseudomonas fluorescens subsp. cellulosa).